Reading from the N-terminus, the 238-residue chain is Purine nucleoside phosphorylase DeoD-type (238 aa).

Residue H4 coordinates a purine D-ribonucleoside. Phosphate is bound by residues G20, R24, R43, and 87-90 (RVGS). A purine D-ribonucleoside contacts are provided by residues 179–181 (EME) and 203–204 (SD). D204 (proton donor) is an active-site residue.

This sequence belongs to the PNP/UDP phosphorylase family. In terms of assembly, homohexamer; trimer of homodimers.

The catalysed reaction is a purine D-ribonucleoside + phosphate = a purine nucleobase + alpha-D-ribose 1-phosphate. It catalyses the reaction a purine 2'-deoxy-D-ribonucleoside + phosphate = a purine nucleobase + 2-deoxy-alpha-D-ribose 1-phosphate. Catalyzes the reversible phosphorolytic breakdown of the N-glycosidic bond in the beta-(deoxy)ribonucleoside molecules, with the formation of the corresponding free purine bases and pentose-1-phosphate. The polypeptide is Purine nucleoside phosphorylase DeoD-type (Mannheimia succiniciproducens (strain KCTC 0769BP / MBEL55E)).